Consider the following 891-residue polypeptide: Alanine--tRNA ligase (891 aa).

Residues histidine 564, histidine 568, cysteine 677, and histidine 681 each contribute to the Zn(2+) site.

Belongs to the class-II aminoacyl-tRNA synthetase family. Requires Zn(2+) as cofactor.

It localises to the cytoplasm. It catalyses the reaction tRNA(Ala) + L-alanine + ATP = L-alanyl-tRNA(Ala) + AMP + diphosphate. Its function is as follows. Catalyzes the attachment of alanine to tRNA(Ala) in a two-step reaction: alanine is first activated by ATP to form Ala-AMP and then transferred to the acceptor end of tRNA(Ala). Also edits incorrectly charged Ser-tRNA(Ala) and Gly-tRNA(Ala) via its editing domain. This is Alanine--tRNA ligase from Rhodopseudomonas palustris (strain HaA2).